The primary structure comprises 195 residues: CASP-like protein IN26 (195 aa).

Residues 1-26 lie on the Cytoplasmic side of the membrane; the sequence is VAPTGSVETEKAGPSYKPKEYYKVTE. The helical transmembrane segment at 27-47 threads the bilayer; sequence AILRLLLLASLVVAVVVMVTS. Over 48-75 the chain is Extracellular; sequence KETELISVKLDPFPPFMLPLTAKFTQSP. The chain crosses the membrane as a helical span at residues 76–96; that stretch reads AFIYFVAGLSVAGLYTIISTL. Residues 97–120 lie on the Cytoplasmic side of the membrane; the sequence is ASFYNLLIKPGFCPALVSHFIILD. Residues 121–143 form a helical membrane-spanning segment; that stretch reads VVMLGIVGTATGAAGGVAYIGLK. Over 144–163 the chain is Extracellular; sequence GNSHVGWTKVCNKYGKLCTH. A helical transmembrane segment spans residues 164 to 184; the sequence is LGASLAVSFFAFIVLLLLIIL. At 185-195 the chain is on the cytoplasmic side; sequence SIHSLSKKIPK.

This sequence belongs to the Casparian strip membrane proteins (CASP) family. In terms of assembly, homodimer and heterodimers.

It is found in the cell membrane. The polypeptide is CASP-like protein IN26 (IN26) (Ipomoea nil (Japanese morning glory)).